The chain runs to 1107 residues: uncharacterized protein (1107 aa).

The span at 180-204 (SGNGSSGGNNNNNNNSLNNSNNSIG) shows a compositional bias: low complexity. Disordered regions lie at residues 180-251 (SGNG…SGNN) and 501-530 (LMNINNNNNNNNSNNNNNNNDQNKDKDNQM). A compositionally biased stretch (gly residues) spans 205–215 (SSGGNGGGGSN). A compositionally biased stretch (polar residues) spans 219-237 (PSMSPQFTSISKTNSPQII). Low complexity-rich tracts occupy residues 238-251 (NTSSNNLNSSSGNN) and 501-521 (LMNINNNNNNNNSNNNNNNND). 2 coiled-coil regions span residues 789-816 (KKDIIEHLTQRHNQYQSNINEDEQIYRE) and 940-1012 (NIDH…NMLK).

This is an uncharacterized protein from Dictyostelium discoideum (Social amoeba).